A 536-amino-acid chain; its full sequence is CTP synthase (536 aa).

Residues 1–267 (MSKFVFVTGG…CKETLKYLEL (267 aa)) are amidoligase domain. A CTP-binding site is contributed by S13. S13 provides a ligand contact to UTP. ATP is bound by residues 14–19 (SIGKGI) and D71. Mg(2+) contacts are provided by D71 and E141. Residues 148-150 (DIE), 188-193 (KTKPTQ), and K224 each bind CTP. Residues 188–193 (KTKPTQ) and K224 each bind UTP. In terms of domain architecture, Glutamine amidotransferase type-1 spans 292–534 (KVALVGKYIE…IKSSQENLTQ (243 aa)). Residue G354 coordinates L-glutamine. Residue C381 is the Nucleophile; for glutamine hydrolysis of the active site. Residues 382–385 (LGMQ), E405, and R462 contribute to the L-glutamine site. Active-site residues include H507 and E509.

Belongs to the CTP synthase family. In terms of assembly, homotetramer.

It catalyses the reaction UTP + L-glutamine + ATP + H2O = CTP + L-glutamate + ADP + phosphate + 2 H(+). The enzyme catalyses L-glutamine + H2O = L-glutamate + NH4(+). The catalysed reaction is UTP + NH4(+) + ATP = CTP + ADP + phosphate + 2 H(+). It participates in pyrimidine metabolism; CTP biosynthesis via de novo pathway; CTP from UDP: step 2/2. Its activity is regulated as follows. Allosterically activated by GTP, when glutamine is the substrate; GTP has no effect on the reaction when ammonia is the substrate. The allosteric effector GTP functions by stabilizing the protein conformation that binds the tetrahedral intermediate(s) formed during glutamine hydrolysis. Inhibited by the product CTP, via allosteric rather than competitive inhibition. Catalyzes the ATP-dependent amination of UTP to CTP with either L-glutamine or ammonia as the source of nitrogen. Regulates intracellular CTP levels through interactions with the four ribonucleotide triphosphates. The sequence is that of CTP synthase from Prochlorococcus marinus (strain MIT 9312).